Reading from the N-terminus, the 101-residue chain is DNA-binding protein Fis (101 aa).

Positions 77–96 form a DNA-binding region, H-T-H motif; sequence QTRAANMLGINRGTLRKKLK.

It belongs to the transcriptional regulatory Fis family. In terms of assembly, homodimer.

Its function is as follows. Activates ribosomal RNA transcription. Plays a direct role in upstream activation of rRNA promoters. This chain is DNA-binding protein Fis, found in Shewanella loihica (strain ATCC BAA-1088 / PV-4).